We begin with the raw amino-acid sequence, 304 residues long: MNWITNYVRPKINSMLGRREVPENLWIKCPETGEMVFHRDLEENKWVIPQSGFHMKMPAKARLKDLFDGGIYEAFPQPKVAQDPLKFRDSKKYSDRLRDSRAKTELEDTIVAGLGQVQGIKLVAVAHEFNFIGGSLGIAAGEAIVKAFERAIAEKCPLVMFPASGGARMQEGILSLMQLPRTTVALNMLKEAGLPYIVVLTNPTTGGVTASYAMLGDIHMAEPGAEIGFAGKRVIEQTLREKLPEGFQTSEYLLEHGMVDMVVKRHDIPETLARVLNILMKKPAKAVKRDTATELAPLPVAASA.

Residues leucine 25–glutamate 294 enclose the CoA carboxyltransferase N-terminal domain.

It belongs to the AccD/PCCB family. Acetyl-CoA carboxylase is a heterohexamer composed of biotin carboxyl carrier protein (AccB), biotin carboxylase (AccC) and two subunits each of ACCase subunit alpha (AccA) and ACCase subunit beta (AccD).

Its subcellular location is the cytoplasm. The catalysed reaction is N(6)-carboxybiotinyl-L-lysyl-[protein] + acetyl-CoA = N(6)-biotinyl-L-lysyl-[protein] + malonyl-CoA. It functions in the pathway lipid metabolism; malonyl-CoA biosynthesis; malonyl-CoA from acetyl-CoA: step 1/1. Its function is as follows. Component of the acetyl coenzyme A carboxylase (ACC) complex. Biotin carboxylase (BC) catalyzes the carboxylation of biotin on its carrier protein (BCCP) and then the CO(2) group is transferred by the transcarboxylase to acetyl-CoA to form malonyl-CoA. The sequence is that of Acetyl-coenzyme A carboxylase carboxyl transferase subunit beta from Rhizobium meliloti (strain 1021) (Ensifer meliloti).